The following is a 277-amino-acid chain: Probable xyloglucan endotransglucosylase/hydrolase protein 11 (277 aa).

The N-terminal stretch at 1–24 (MRGSDQKILLMVMVVVAVVAAAQG) is a signal peptide. Residues 32–209 (VTWGNNYYQT…PKQMPYIAKF (178 aa)) form the GH16 domain. N-linked (GlcNAc...) asparagine glycosylation occurs at asparagine 50. The active-site Nucleophile is glutamate 107. Xyloglucan contacts are provided by residues 123 to 125 (NTN) and 133 to 135 (GKD). Asparagine 194 is a glycosylation site (N-linked (GlcNAc...) asparagine). Cystine bridges form between cysteine 217–cysteine 227 and cysteine 260–cysteine 273. Arginine 265 contacts xyloglucan.

Belongs to the glycosyl hydrolase 16 family. XTH group 1 subfamily. In terms of processing, contains at least one intrachain disulfide bond essential for its enzymatic activity.

Its subcellular location is the secreted. The protein resides in the cell wall. It localises to the extracellular space. It is found in the apoplast. It catalyses the reaction breaks a beta-(1-&gt;4) bond in the backbone of a xyloglucan and transfers the xyloglucanyl segment on to O-4 of the non-reducing terminal glucose residue of an acceptor, which can be a xyloglucan or an oligosaccharide of xyloglucan.. Functionally, may catalyze xyloglucan endohydrolysis (XEH) and/or endotransglycosylation (XET). Cleaves and religates xyloglucan polymers, an essential constituent of the primary cell wall, and thereby participates in cell wall construction of growing tissues. The chain is Probable xyloglucan endotransglucosylase/hydrolase protein 11 (XTH11) from Arabidopsis thaliana (Mouse-ear cress).